The sequence spans 365 residues: Class E basic helix-loop-helix protein 22 (365 aa).

Disordered regions lie at residues Ala34–Gly93, Gly134–Cys156, and His188–Lys225. A compositionally biased stretch (gly residues) spans Gly82–Gly93. The segment covering Gly191–Ser216 has biased composition (gly residues). The region spanning Ala226–Gln280 is the bHLH domain.

In terms of assembly, heterodimer with other bHLH proteins, like TCF3/E47. As to expression, kidney, lung, brain and pancreas (insulinoma).

It is found in the nucleus. Its function is as follows. Inhibits DNA binding of TCF3/E47 homodimers and TCF3 (E47)/NEUROD1 heterodimers and acts as a strong repressor of Neurod1 and Myod-responsive genes, probably by heterodimerization with class a basic helix-loop-helix factors. Despite the presence of an intact basic domain, does not bind to DNA. The polypeptide is Class E basic helix-loop-helix protein 22 (BHLHE22) (Mesocricetus auratus (Golden hamster)).